A 354-amino-acid chain; its full sequence is Membrane progestin receptor beta (354 aa).

The Cytoplasmic portion of the chain corresponds to 1–76; it reads MTTAILERLS…FSLFQKHNEV (76 aa). The chain crosses the membrane as a helical span at residues 77–97; sequence VNVWTHLLAALAVLLRFWAFV. Topologically, residues 98-111 are extracellular; it reads EAGALQWASPHTLP. A helical membrane pass occupies residues 112–132; the sequence is LLLFILSSITYLTCSLLAHLL. The Cytoplasmic segment spans residues 133–173; the sequence is QSKSELSHYTFYFVDYVGVSVYQYGSALAHFFYSSDQAWYE. A helical membrane pass occupies residues 174–194; sequence LFWIFFLPAAAFCGWLSCAGC. The Extracellular segment spans residues 195–213; it reads CYAKYRYRRPYPVMRKICQ. The helical transmembrane segment at 214–234 threads the bilayer; it reads VVPAGLAFVLDISPVAHRVAL. The Cytoplasmic portion of the chain corresponds to 235 to 243; that stretch reads CHLAGCQEQ. Residues 244-264 form a helical membrane-spanning segment; the sequence is AAWYHTLQILFFLVSAYFFSC. Topologically, residues 265–283 are extracellular; it reads PVPEKYFPGSCDIVGHGHQ. A helical transmembrane segment spans residues 284–304; sequence IFHAFLSVCTLSQLEAILLDY. Over 305–315 the chain is Cytoplasmic; it reads QGRHEIFLQRH. A helical membrane pass occupies residues 316–336; that stretch reads GPLSVYSACLSFFVLAACSAA. Residues 337 to 354 are Extracellular-facing; the sequence is TATLLRHKVKDRLIKKDS.

It belongs to the ADIPOR family. Expressed in brain and testis.

The protein localises to the cell membrane. Its function is as follows. Plasma membrane progesterone (P4) receptor coupled to G proteins. Seems to act through a G(i) mediated pathway. May be involved in oocyte maturation. Also binds dehydroepiandrosterone (DHEA), pregnanolone, pregnenolone and allopregnanolone. The protein is Membrane progestin receptor beta of Mus musculus (Mouse).